Here is a 575-residue protein sequence, read N- to C-terminus: Proline--tRNA ligase (575 aa).

This sequence belongs to the class-II aminoacyl-tRNA synthetase family. ProS type 1 subfamily. As to quaternary structure, homodimer.

It is found in the cytoplasm. The enzyme catalyses tRNA(Pro) + L-proline + ATP = L-prolyl-tRNA(Pro) + AMP + diphosphate. Functionally, catalyzes the attachment of proline to tRNA(Pro) in a two-step reaction: proline is first activated by ATP to form Pro-AMP and then transferred to the acceptor end of tRNA(Pro). As ProRS can inadvertently accommodate and process non-cognate amino acids such as alanine and cysteine, to avoid such errors it has two additional distinct editing activities against alanine. One activity is designated as 'pretransfer' editing and involves the tRNA(Pro)-independent hydrolysis of activated Ala-AMP. The other activity is designated 'posttransfer' editing and involves deacylation of mischarged Ala-tRNA(Pro). The misacylated Cys-tRNA(Pro) is not edited by ProRS. The protein is Proline--tRNA ligase of Saccharophagus degradans (strain 2-40 / ATCC 43961 / DSM 17024).